The primary structure comprises 90 residues: Probable Fe(2+)-trafficking protein (90 aa).

The protein belongs to the Fe(2+)-trafficking protein family.

Functionally, could be a mediator in iron transactions between iron acquisition and iron-requiring processes, such as synthesis and/or repair of Fe-S clusters in biosynthetic enzymes. The sequence is that of Probable Fe(2+)-trafficking protein from Verminephrobacter eiseniae (strain EF01-2).